Reading from the N-terminus, the 313-residue chain is Porphobilinogen deaminase (313 aa).

Cys-242 carries the post-translational modification S-(dipyrrolylmethanemethyl)cysteine.

It belongs to the HMBS family. In terms of assembly, monomer. Dipyrromethane is required as a cofactor.

The enzyme catalyses 4 porphobilinogen + H2O = hydroxymethylbilane + 4 NH4(+). The protein operates within porphyrin-containing compound metabolism; protoporphyrin-IX biosynthesis; coproporphyrinogen-III from 5-aminolevulinate: step 2/4. In terms of biological role, tetrapolymerization of the monopyrrole PBG into the hydroxymethylbilane pre-uroporphyrinogen in several discrete steps. This chain is Porphobilinogen deaminase, found in Shigella flexneri.